A 187-amino-acid polypeptide reads, in one-letter code: MATTNDLKNGMTLDIDGVLWNVVGFQHVKPGKGGAFVRTTLKNVLTGKVVDRTFNAGVKVDVATVDRREMTYLYRDGADFVFMDSESYDQIPIPPDVVGGTADYMLENTVATVALHDGAPLYVELPASVELTISQTDPGVQGDRSTGGTKPATLETGATINVPLFITSGEKVKVDTRDGRYLGRVTS.

This sequence belongs to the elongation factor P family.

The protein localises to the cytoplasm. It participates in protein biosynthesis; polypeptide chain elongation. Functionally, involved in peptide bond synthesis. Stimulates efficient translation and peptide-bond synthesis on native or reconstituted 70S ribosomes in vitro. Probably functions indirectly by altering the affinity of the ribosome for aminoacyl-tRNA, thus increasing their reactivity as acceptors for peptidyl transferase. This is Elongation factor P from Frankia casuarinae (strain DSM 45818 / CECT 9043 / HFP020203 / CcI3).